The chain runs to 265 residues: Putative carbamate hydrolase RutD (265 aa).

In terms of domain architecture, AB hydrolase-1 spans 14 to 123 (PTLVLSSGLG…WSSPNPHSAR (110 aa)).

It belongs to the AB hydrolase superfamily. Hydrolase RutD family.

The enzyme catalyses carbamate + 2 H(+) = NH4(+) + CO2. In terms of biological role, involved in pyrimidine catabolism. May facilitate the hydrolysis of carbamate, a reaction that can also occur spontaneously. The polypeptide is Putative carbamate hydrolase RutD (Stutzerimonas stutzeri (strain A1501) (Pseudomonas stutzeri)).